Here is a 676-residue protein sequence, read N- to C-terminus: UvrABC system protein B (676 aa).

The Helicase ATP-binding domain maps to 35 to 192 (QGVADGLMYQ…ARLVAMQYTR (158 aa)). Residue 48-55 (GVTGSGKT) participates in ATP binding. A Beta-hairpin motif is present at residues 101 to 124 (YYDYYQPEAYVPTRDLFIEKDSSV). Positions 439–605 (QVDDLLGEIR…GVNKAVRELI (167 aa)) constitute a Helicase C-terminal domain. The UVR domain maps to 634-669 (AREIKRLEKLMMDHARNLEFEQAAAARDALTALKNR).

Belongs to the UvrB family. As to quaternary structure, forms a heterotetramer with UvrA during the search for lesions. Interacts with UvrC in an incision complex.

Its subcellular location is the cytoplasm. Its function is as follows. The UvrABC repair system catalyzes the recognition and processing of DNA lesions. A damage recognition complex composed of 2 UvrA and 2 UvrB subunits scans DNA for abnormalities. Upon binding of the UvrA(2)B(2) complex to a putative damaged site, the DNA wraps around one UvrB monomer. DNA wrap is dependent on ATP binding by UvrB and probably causes local melting of the DNA helix, facilitating insertion of UvrB beta-hairpin between the DNA strands. Then UvrB probes one DNA strand for the presence of a lesion. If a lesion is found the UvrA subunits dissociate and the UvrB-DNA preincision complex is formed. This complex is subsequently bound by UvrC and the second UvrB is released. If no lesion is found, the DNA wraps around the other UvrB subunit that will check the other stand for damage. The polypeptide is UvrABC system protein B (Bordetella avium (strain 197N)).